Reading from the N-terminus, the 239-residue chain is tRNA (guanine-N(7)-)-methyltransferase (239 aa).

Residues Glu-69, Glu-94, Asp-121, and Asp-144 each contribute to the S-adenosyl-L-methionine site. Asp-144 is an active-site residue. Substrate is bound at residue Lys-148. An interaction with RNA region spans residues 150-155; that stretch reads RHNKRR. Substrate-binding positions include Asp-180 and 217–220; that span reads TKFE.

It belongs to the class I-like SAM-binding methyltransferase superfamily. TrmB family. In terms of assembly, monomer.

The enzyme catalyses guanosine(46) in tRNA + S-adenosyl-L-methionine = N(7)-methylguanosine(46) in tRNA + S-adenosyl-L-homocysteine. Its pathway is tRNA modification; N(7)-methylguanine-tRNA biosynthesis. Catalyzes the formation of N(7)-methylguanine at position 46 (m7G46) in tRNA. This Escherichia coli O6:K15:H31 (strain 536 / UPEC) protein is tRNA (guanine-N(7)-)-methyltransferase.